Consider the following 448-residue polypeptide: Tubulin beta-1 chain (448 aa).

Residues glutamine 11, glutamate 72, serine 141, glycine 145, threonine 146, glycine 147, asparagine 207, and asparagine 229 each contribute to the GTP site. Glutamate 72 contributes to the Mg(2+) binding site. The disordered stretch occupies residues 424–448; sequence QQYQDAGMDDDEAEEAYEEEEPVEE. Positions 430-448 are enriched in acidic residues; sequence GMDDDEAEEAYEEEEPVEE.

It belongs to the tubulin family. In terms of assembly, dimer of alpha and beta chains. A typical microtubule is a hollow water-filled tube with an outer diameter of 25 nm and an inner diameter of 15 nM. Alpha-beta heterodimers associate head-to-tail to form protofilaments running lengthwise along the microtubule wall with the beta-tubulin subunit facing the microtubule plus end conferring a structural polarity. Microtubules usually have 13 protofilaments but different protofilament numbers can be found in some organisms and specialized cells. The cofactor is Mg(2+).

Its subcellular location is the cytoplasm. The protein localises to the cytoskeleton. Functionally, tubulin is the major constituent of microtubules, a cylinder consisting of laterally associated linear protofilaments composed of alpha- and beta-tubulin heterodimers. Microtubules grow by the addition of GTP-tubulin dimers to the microtubule end, where a stabilizing cap forms. Below the cap, tubulin dimers are in GDP-bound state, owing to GTPase activity of alpha-tubulin. The protein is Tubulin beta-1 chain (TUB1) of Colletotrichum gloeosporioides (Anthracnose fungus).